A 492-amino-acid polypeptide reads, in one-letter code: ATP synthase subunit beta, chloroplastic (492 aa).

Residue 170 to 177 (GGAGVGKT) participates in ATP binding.

The protein belongs to the ATPase alpha/beta chains family. F-type ATPases have 2 components, CF(1) - the catalytic core - and CF(0) - the membrane proton channel. CF(1) has five subunits: alpha(3), beta(3), gamma(1), delta(1), epsilon(1). CF(0) has four main subunits: a(1), b(1), b'(1) and c(9-12).

It is found in the plastid. Its subcellular location is the chloroplast thylakoid membrane. The enzyme catalyses ATP + H2O + 4 H(+)(in) = ADP + phosphate + 5 H(+)(out). Produces ATP from ADP in the presence of a proton gradient across the membrane. The catalytic sites are hosted primarily by the beta subunits. This is ATP synthase subunit beta, chloroplastic from Angiopteris lygodiifolia (Turnip fern).